A 418-amino-acid chain; its full sequence is Putative ion-transport protein YfeO (418 aa).

Helical transmembrane passes span 10 to 30 (LLLS…LIVV), 54 to 74 (DSPL…GLVI), 99 to 119 (ALPG…SLGP), 120 to 140 (EHPI…RLLP), 149 to 169 (ILAS…AALI), 186 to 206 (LFAP…FFHP), 223 to 243 (ILSG…AVWC), 258 to 278 (VLVL…GGPV), 300 to 320 (DYFL…ASGF), 322 to 342 (GGRI…LHEH), 343 to 363 (VPAV…VLVV), and 371 to 391 (LFMA…CIVM).

It belongs to the chloride channel (TC 2.A.49) family.

Its subcellular location is the cell membrane. This is Putative ion-transport protein YfeO from Escherichia coli O9:H4 (strain HS).